Reading from the N-terminus, the 894-residue chain is Phosphinomethylmalate isomerase (894 aa).

[4Fe-4S] cluster contacts are provided by cysteine 438, cysteine 504, and cysteine 507.

This sequence belongs to the aconitase/IPM isomerase family. [4Fe-4S] cluster is required as a cofactor.

The enzyme catalyses phosphinomethylmalate = phosphinomethylisomalate. It carries out the reaction phosphinomethylmalate = 2-(phosphinatomethylidene)butanedioate + H2O. The catalysed reaction is 2-(phosphinatomethylidene)butanedioate + H2O = phosphinomethylisomalate. Its pathway is secondary metabolite biosynthesis; bialaphos biosynthesis. Isomerase involved in the biosynthesis of phosphinothricin tripeptide (PTT), also known as bialaphos (BA), a natural-product antibiotic and potent herbicide. Probably catalyzes the isomerization of phosphinomethylmalate to phosphinomethylisomalate. Shows no standard aconitase activity with citrate as a substrate and is not able to complement an acnA mutant. The protein is Phosphinomethylmalate isomerase of Streptomyces viridochromogenes (strain DSM 40736 / JCM 4977 / BCRC 1201 / Tue 494).